Reading from the N-terminus, the 208-residue chain is Interleukin-6 (208 aa).

Positions 1–27 are cleaved as a signal peptide; the sequence is MTFLSTSAFSPLAFSLGLLLVVATAFP. An intrachain disulfide couples cysteine 68 to cysteine 74. Serine 77 carries the phosphoserine modification. A disulfide bond links cysteine 97 and cysteine 107.

The protein belongs to the IL-6 superfamily. In terms of assembly, component of a hexamer of two molecules each of IL6, IL6R and IL6ST; first binds to IL6R to associate with the signaling subunit IL6ST. Interacts with IL6R (via the N-terminal ectodomain); this interaction may be affected by IL6R-binding with SORL1, hence decreasing IL6 cis signaling. Interacts with SORL1 (via the N-terminal ectodomain); this interaction leads to IL6 internalization and lysosomal degradation. May form a trimeric complex with the soluble SORL1 ectodomain and soluble IL6R receptor; this interaction might stabilize circulating IL6, hence promoting IL6 trans signaling.

It is found in the secreted. In terms of biological role, cytokine with a wide variety of biological functions in immunity, tissue regeneration, and metabolism. Binds to IL6R, then the complex associates to the signaling subunit IL6ST/gp130 to trigger the intracellular IL6-signaling pathway. The interaction with the membrane-bound IL6R and IL6ST stimulates 'classic signaling', whereas the binding of IL6 and soluble IL6R to IL6ST stimulates 'trans-signaling'. Alternatively, 'cluster signaling' occurs when membrane-bound IL6:IL6R complexes on transmitter cells activate IL6ST receptors on neighboring receiver cells. IL6 is a potent inducer of the acute phase response. Rapid production of IL6 contributes to host defense during infection and tissue injury, but excessive IL6 synthesis is involved in disease pathology. In the innate immune response, is synthesized by myeloid cells, such as macrophages and dendritic cells, upon recognition of pathogens through toll-like receptors (TLRs) at the site of infection or tissue injury. In the adaptive immune response, is required for the differentiation of B cells into immunoglobulin-secreting cells. Plays a major role in the differentiation of CD4(+) T cell subsets. Essential factor for the development of T follicular helper (Tfh) cells that are required for the induction of germinal-center formation. Required to drive naive CD4(+) T cells to the Th17 lineage. Also required for proliferation of myeloma cells and the survival of plasmablast cells. Functionally, acts as an essential factor in bone homeostasis and on vessels directly or indirectly by induction of VEGF, resulting in increased angiogenesis activity and vascular permeability. Induces, through 'trans-signaling' and synergistically with IL1B and TNF, the production of VEGF. Involved in metabolic controls, is discharged into the bloodstream after muscle contraction increasing lipolysis and improving insulin resistance. 'Trans-signaling' in central nervous system also regulates energy and glucose homeostasis. Mediates, through GLP-1, crosstalk between insulin-sensitive tissues, intestinal L cells and pancreatic islets to adapt to changes in insulin demand. Also acts as a myokine. Plays a protective role during liver injury, being required for maintenance of tissue regeneration. Also has a pivotal role in iron metabolism by regulating HAMP/hepcidin expression upon inflammation or bacterial infection. Through activation of IL6ST-YAP-NOTCH pathway, induces inflammation-induced epithelial regeneration. The sequence is that of Interleukin-6 (IL6) from Felis catus (Cat).